We begin with the raw amino-acid sequence, 1242 residues long: Phosphorylase b kinase regulatory subunit alpha, skeletal muscle isoform (1242 aa).

Residues S630, S731, S737, S740, S760, S813, S974, S983, and S987 each carry the phosphoserine modification. The calmodulin-binding stretch occupies residues 812 to 842 (LSELYVKVGEIRHWGLIRYISGILRKKVEAL). S1009 is modified (phosphoserine; by autocatalysis). A Phosphoserine; by PKA modification is found at S1020. 2 positions are modified to phosphoserine: S1022 and S1025. The calmodulin-binding stretch occupies residues 1065–1105 (SKDSRQGQWQRRRRLDGALNRVPIGFYQKVWKILQKCHGLS). A Phosphoserine modification is found at S1132. C1239 carries the S-farnesyl cysteine lipid modification.

This sequence belongs to the phosphorylase b kinase regulatory chain family. Hexadecamer of 4 heterotetramers, each composed of alpha, beta, gamma, and delta subunits. Alpha (PHKA1 or PHKA2) and beta (PHKB) are regulatory subunits, gamma (PHKG1 or PHKG2) is the catalytic subunit, and delta is calmodulin. Although the final Cys may be farnesylated, the terminal tripeptide is probably not removed, and the C-terminus is not methylated.

The protein localises to the cell membrane. The protein operates within glycan biosynthesis; glycogen metabolism. By phosphorylation of various serine residues and by calcium. Its function is as follows. Phosphorylase b kinase catalyzes the phosphorylation of serine in certain substrates, including troponin I. The alpha chain may bind calmodulin. In Rattus norvegicus (Rat), this protein is Phosphorylase b kinase regulatory subunit alpha, skeletal muscle isoform (Phka1).